Consider the following 264-residue polypeptide: uncharacterized protein (264 aa).

Positions Met-1–Thr-21 are cleaved as a signal peptide. A disordered region spans residues Gln-182 to Ser-247. The segment covering Pro-190–Pro-213 has biased composition (low complexity). N-linked (GlcNAc...) asparagine glycosylation is present at Asn-209. Residues Pro-214–Pro-226 show a composition bias toward pro residues. Positions Gly-230 to Ser-247 are enriched in polar residues.

As to expression, component of the acid-insoluble and acid-soluble organic matrix of calcified layers of the shell (at protein level).

It is found in the secreted. This is an uncharacterized protein from Lottia gigantea (Giant owl limpet).